We begin with the raw amino-acid sequence, 78 residues long: MAKAEIRKPKPKQNPLKAADVTEIDYKDVALLRKFISDRGKIRARRVTGVSVQEQRKIAQAIKNAREVALLPYSGAGR.

This sequence belongs to the bacterial ribosomal protein bS18 family. In terms of assembly, part of the 30S ribosomal subunit. Forms a tight heterodimer with protein bS6.

In terms of biological role, binds as a heterodimer with protein bS6 to the central domain of the 16S rRNA, where it helps stabilize the platform of the 30S subunit. In Kocuria rhizophila (strain ATCC 9341 / DSM 348 / NBRC 103217 / DC2201), this protein is Small ribosomal subunit protein bS18.